The chain runs to 257 residues: Imidazole glycerol phosphate synthase subunit HisF (257 aa).

Residues D12 and D131 contribute to the active site.

This sequence belongs to the HisA/HisF family. Heterodimer of HisH and HisF.

It localises to the cytoplasm. It catalyses the reaction 5-[(5-phospho-1-deoxy-D-ribulos-1-ylimino)methylamino]-1-(5-phospho-beta-D-ribosyl)imidazole-4-carboxamide + L-glutamine = D-erythro-1-(imidazol-4-yl)glycerol 3-phosphate + 5-amino-1-(5-phospho-beta-D-ribosyl)imidazole-4-carboxamide + L-glutamate + H(+). It functions in the pathway amino-acid biosynthesis; L-histidine biosynthesis; L-histidine from 5-phospho-alpha-D-ribose 1-diphosphate: step 5/9. IGPS catalyzes the conversion of PRFAR and glutamine to IGP, AICAR and glutamate. The HisF subunit catalyzes the cyclization activity that produces IGP and AICAR from PRFAR using the ammonia provided by the HisH subunit. The polypeptide is Imidazole glycerol phosphate synthase subunit HisF (Burkholderia vietnamiensis (strain G4 / LMG 22486) (Burkholderia cepacia (strain R1808))).